A 268-amino-acid chain; its full sequence is Glucosamine-6-phosphate deaminase (268 aa).

Catalysis depends on Asp-72, which acts as the Proton acceptor; for enolization step. The active-site For ring-opening step is the Asp-141. His-143 functions as the Proton acceptor; for ring-opening step in the catalytic mechanism. Catalysis depends on Glu-148, which acts as the For ring-opening step.

This sequence belongs to the glucosamine/galactosamine-6-phosphate isomerase family. NagB subfamily. Homohexamer.

It carries out the reaction alpha-D-glucosamine 6-phosphate + H2O = beta-D-fructose 6-phosphate + NH4(+). The protein operates within amino-sugar metabolism; N-acetylneuraminate degradation; D-fructose 6-phosphate from N-acetylneuraminate: step 5/5. Allosterically activated by N-acetylglucosamine 6-phosphate (GlcNAc6P). Functionally, catalyzes the reversible isomerization-deamination of glucosamine 6-phosphate (GlcN6P) to form fructose 6-phosphate (Fru6P) and ammonium ion. The polypeptide is Glucosamine-6-phosphate deaminase (Histophilus somni (strain 2336) (Haemophilus somnus)).